Here is a 498-residue protein sequence, read N- to C-terminus: N-succinylglutamate 5-semialdehyde dehydrogenase 1 (498 aa).

Residue Gly231–Gly236 participates in NAD(+) binding. Active-site residues include Glu254 and Cys288.

This sequence belongs to the aldehyde dehydrogenase family. AstD subfamily.

The enzyme catalyses N-succinyl-L-glutamate 5-semialdehyde + NAD(+) + H2O = N-succinyl-L-glutamate + NADH + 2 H(+). It functions in the pathway amino-acid degradation; L-arginine degradation via AST pathway; L-glutamate and succinate from L-arginine: step 4/5. Catalyzes the NAD-dependent reduction of succinylglutamate semialdehyde into succinylglutamate. In Shewanella denitrificans (strain OS217 / ATCC BAA-1090 / DSM 15013), this protein is N-succinylglutamate 5-semialdehyde dehydrogenase 1.